Consider the following 158-residue polypeptide: Nucleoside diphosphate kinase (158 aa).

The ATP site is built by lysine 16, phenylalanine 64, arginine 92, threonine 98, arginine 109, and asparagine 119. Histidine 122 (pros-phosphohistidine intermediate) is an active-site residue.

Belongs to the NDK family. The cofactor is Mg(2+).

It is found in the cytoplasm. It catalyses the reaction a 2'-deoxyribonucleoside 5'-diphosphate + ATP = a 2'-deoxyribonucleoside 5'-triphosphate + ADP. It carries out the reaction a ribonucleoside 5'-diphosphate + ATP = a ribonucleoside 5'-triphosphate + ADP. Its function is as follows. Major role in the synthesis of nucleoside triphosphates other than ATP. The ATP gamma phosphate is transferred to the NDP beta phosphate via a ping-pong mechanism, using a phosphorylated active-site intermediate. This Haloquadratum walsbyi (strain DSM 16790 / HBSQ001) protein is Nucleoside diphosphate kinase.